Consider the following 20-residue polypeptide: Snaclec ophioluxin subunit alpha (20 aa).

Cys-4 and Cys-15 form a disulfide bridge. Residues 11 to 20 form the C-type lectin domain; the sequence is YDQHCYRIIN.

Belongs to the snaclec family. In terms of assembly, heterodimer of subunits alpha and beta; disulfide-linked. Expressed by the venom gland.

It localises to the secreted. In terms of biological role, binds to the platelet and collagen receptor glycoprotein VI (GP6) and activates platelet aggregation. This Ophiophagus hannah (King cobra) protein is Snaclec ophioluxin subunit alpha.